The primary structure comprises 381 residues: 4-hydroxy-3-methylbut-2-en-1-yl diphosphate synthase (flavodoxin) (381 aa).

[4Fe-4S] cluster is bound by residues cysteine 280, cysteine 283, cysteine 315, and glutamate 322.

This sequence belongs to the IspG family. Requires [4Fe-4S] cluster as cofactor.

The enzyme catalyses (2E)-4-hydroxy-3-methylbut-2-enyl diphosphate + oxidized [flavodoxin] + H2O + 2 H(+) = 2-C-methyl-D-erythritol 2,4-cyclic diphosphate + reduced [flavodoxin]. Its pathway is isoprenoid biosynthesis; isopentenyl diphosphate biosynthesis via DXP pathway; isopentenyl diphosphate from 1-deoxy-D-xylulose 5-phosphate: step 5/6. Functionally, converts 2C-methyl-D-erythritol 2,4-cyclodiphosphate (ME-2,4cPP) into 1-hydroxy-2-methyl-2-(E)-butenyl 4-diphosphate. The sequence is that of 4-hydroxy-3-methylbut-2-en-1-yl diphosphate synthase (flavodoxin) from Clavibacter sepedonicus (Clavibacter michiganensis subsp. sepedonicus).